Reading from the N-terminus, the 516-residue chain is 4-hydroxybenzoate brominase (decarboxylating) (516 aa).

The FAD site is built by S13, E32, V40, F41, H51, V102, and Q365.

It belongs to the FMO family. The cofactor is FAD.

The enzyme catalyses 2 bromide + 4-hydroxybenzoate + 2 NADPH + 2 O2 + 5 H(+) = 2,4-dibromophenol + CO2 + 2 NADP(+) + 4 H2O. It carries out the reaction bromide + 4-hydroxybenzoate + NADPH + O2 + 2 H(+) = 3-bromo-4-hydroxybenzoate + NADP(+) + 2 H2O. It catalyses the reaction 3-bromo-4-hydroxybenzoate + bromide + NADPH + O2 + 3 H(+) = 2,4-dibromophenol + CO2 + NADP(+) + 2 H2O. The catalysed reaction is 3,4-dihydroxybenzoate + 2 bromide + 2 NADPH + 2 O2 + 5 H(+) = 3,5-dibromobenzene-1,2-diol + CO2 + 2 NADP(+) + 4 H2O. The enzyme catalyses 3,4-dihydroxybenzoate + bromide + NADPH + O2 + 2 H(+) = 3-bromo-4,5-dihydroxybenzoate + NADP(+) + 2 H2O. It carries out the reaction 3-bromo-4,5-dihydroxybenzoate + bromide + NADPH + O2 + 3 H(+) = 3,5-dibromobenzene-1,2-diol + CO2 + NADP(+) + 2 H2O. In terms of biological role, brominase involved in the biosynthesis of polybrominated aromatic organic compounds. Catalyzes the bromination of 4-hydroxybenzoate (4-HBA) to 3-bromo-4-hydroxybenzoate, followed by bromination and decarboxylation of 3-bromo-4-hydroxybenzoate to 2,4-dibromophenol. Can also use 3,4-dihydroxybenzoate, with lower efficiency, forming 3-bromo-4,5-dihydroxybenzoate and 3,5-dibromobenzene-1,2-diol. The chain is 4-hydroxybenzoate brominase (decarboxylating) from Marinomonas mediterranea (strain ATCC 700492 / JCM 21426 / NBRC 103028 / MMB-1).